A 66-amino-acid polypeptide reads, in one-letter code: Dermaseptin PD-3-7 (66 aa).

An N-terminal signal peptide occupies residues 1–22 (MSFMKKSLLLVLFLGVVSLSNC). Positions 23–40 (EEEKGENENEDHEEHHEE) are excised as a propeptide.

Expressed by the skin glands.

It is found in the secreted. Possesses a potent antimicrobial activity against Gram-positive and Gram-negative bacteria. Probably acts by disturbing membrane functions with its amphipathic structure. In Agalychnis dacnicolor (Giant Mexican leaf frog), this protein is Dermaseptin PD-3-7.